Here is a 256-residue protein sequence, read N- to C-terminus: Triosephosphate isomerase (256 aa).

12–14 (NWK) is a substrate binding site. His99 functions as the Electrophile in the catalytic mechanism. Glu169 functions as the Proton acceptor in the catalytic mechanism. Residues Gly175, Ser214, and 235–236 (GG) contribute to the substrate site.

It belongs to the triosephosphate isomerase family. In terms of assembly, homodimer.

The protein resides in the cytoplasm. The enzyme catalyses D-glyceraldehyde 3-phosphate = dihydroxyacetone phosphate. The protein operates within carbohydrate biosynthesis; gluconeogenesis. It functions in the pathway carbohydrate degradation; glycolysis; D-glyceraldehyde 3-phosphate from glycerone phosphate: step 1/1. Involved in the gluconeogenesis. Catalyzes stereospecifically the conversion of dihydroxyacetone phosphate (DHAP) to D-glyceraldehyde-3-phosphate (G3P). The chain is Triosephosphate isomerase from Mesorhizobium japonicum (strain LMG 29417 / CECT 9101 / MAFF 303099) (Mesorhizobium loti (strain MAFF 303099)).